The primary structure comprises 350 residues: S-adenosylmethionine:tRNA ribosyltransferase-isomerase (350 aa).

It belongs to the QueA family. In terms of assembly, monomer.

The protein resides in the cytoplasm. It catalyses the reaction 7-aminomethyl-7-carbaguanosine(34) in tRNA + S-adenosyl-L-methionine = epoxyqueuosine(34) in tRNA + adenine + L-methionine + 2 H(+). It participates in tRNA modification; tRNA-queuosine biosynthesis. Its function is as follows. Transfers and isomerizes the ribose moiety from AdoMet to the 7-aminomethyl group of 7-deazaguanine (preQ1-tRNA) to give epoxyqueuosine (oQ-tRNA). This is S-adenosylmethionine:tRNA ribosyltransferase-isomerase from Bacillus cereus (strain Q1).